Reading from the N-terminus, the 256-residue chain is Ribonuclease 3 (256 aa).

The RNase III domain maps to 6-128 (LATLETRLDH…LFGAVFLDAG (123 aa)). Glu41 contacts Mg(2+). Asp45 is a catalytic residue. The Mg(2+) site is built by Asp114 and Glu117. Glu117 is a catalytic residue. Residues 155-225 (DAKTLLQEFL…AKVALEAAQA (71 aa)) form the DRBM domain.

The protein belongs to the ribonuclease III family. Homodimer. Requires Mg(2+) as cofactor.

It is found in the cytoplasm. It catalyses the reaction Endonucleolytic cleavage to 5'-phosphomonoester.. Its function is as follows. Digests double-stranded RNA. Involved in the processing of primary rRNA transcript to yield the immediate precursors to the large and small rRNAs (23S and 16S). Processes some mRNAs, and tRNAs when they are encoded in the rRNA operon. Processes pre-crRNA and tracrRNA of type II CRISPR loci if present in the organism. The protein is Ribonuclease 3 of Bordetella bronchiseptica (strain ATCC BAA-588 / NCTC 13252 / RB50) (Alcaligenes bronchisepticus).